Consider the following 213-residue polypeptide: ATP synthase peripheral stalk subunit OSCP, mitochondrial (213 aa).

Residues 1–23 (MAAPAVSGVSQQVRYFGTSVVRP) constitute a mitochondrion transit peptide. Residues 5–23 (AVSGVSQQVRYFGTSVVRP) carry the SIFI-degron motif. Lysine 54, lysine 60, lysine 70, and lysine 73 each carry N6-acetyllysine. Lysine 90 bears the N6-succinyllysine mark. Residues lysine 158 and lysine 162 each carry the N6-acetyllysine; alternate modification. N6-succinyllysine; alternate is present on residues lysine 158 and lysine 162. Residues lysine 172, lysine 176, and lysine 192 each carry the N6-acetyllysine modification. Lysine 199 carries the N6-succinyllysine modification.

Belongs to the ATPase delta chain family. As to quaternary structure, component of the ATP synthase complex composed at least of ATP5F1A/subunit alpha, ATP5F1B/subunit beta, ATP5MC1/subunit c (homooctomer), MT-ATP6/subunit a, MT-ATP8/subunit 8, ATP5ME/subunit e, ATP5MF/subunit f, ATP5MG/subunit g, ATP5MK/subunit k, ATP5MJ/subunit j, ATP5F1C/subunit gamma, ATP5F1D/subunit delta, ATP5F1E/subunit epsilon, ATP5PF/subunit F6, ATP5PB/subunit b, ATP5PD/subunit d, ATP5PO/subunit OSCP. ATP synthase complex consists of a soluble F(1) head domain (subunits alpha(3) and beta(3)) - the catalytic core - and a membrane F(0) domain - the membrane proton channel (subunits c, a, 8, e, f, g, k and j). These two domains are linked by a central stalk (subunits gamma, delta, and epsilon) rotating inside the F1 region and a stationary peripheral stalk (subunits F6, b, d, and OSCP). Post-translationally, acetylation at Lys-162 decreases ATP production. Deacetylated by SIRT3. In response to mitochondrial stress, the precursor protein is ubiquitinated by the SIFI complex in the cytoplasm before mitochondrial import, leading to its degradation. Within the SIFI complex, UBR4 initiates ubiquitin chain that are further elongated or branched by KCMF1.

Its subcellular location is the mitochondrion. It is found in the mitochondrion inner membrane. Functionally, subunit OSCP, of the mitochondrial membrane ATP synthase complex (F(1)F(0) ATP synthase or Complex V) that produces ATP from ADP in the presence of a proton gradient across the membrane which is generated by electron transport complexes of the respiratory chain. ATP synthase complex consist of a soluble F(1) head domain - the catalytic core - and a membrane F(1) domain - the membrane proton channel. These two domains are linked by a central stalk rotating inside the F(1) region and a stationary peripheral stalk. During catalysis, ATP synthesis in the catalytic domain of F(1) is coupled via a rotary mechanism of the central stalk subunits to proton translocation. In vivo, can only synthesize ATP although its ATP hydrolase activity can be activated artificially in vitro. Part of the complex F(0) domain. Part of the complex F(0) domain and the peripheric stalk, which acts as a stator to hold the catalytic alpha(3)beta(3) subcomplex and subunit a/ATP6 static relative to the rotary elements. In Callithrix jacchus (White-tufted-ear marmoset), this protein is ATP synthase peripheral stalk subunit OSCP, mitochondrial.